Consider the following 469-residue polypeptide: MPRLLDRQTPVHFIGVGGIGMSALARILVDRGHSVSGSDPRDNATTQQLKTLGVKVFRQQDATCIDAVTGRTAADSPVVVISTAIPESNPELQRARQQGLEIWHRSDLLAALIEQQPSIAVAGSHGKTTTSTLITTLLLEADQDPTAVIGGIVPSLGSNGHSGQGKLLVAEADESDGSLVKFSPSLGVITNLELDHTDHYSCLDDLISTLQRFAGGCDRVLANHDCPILQEHFQPTAWWSNQSDESVDFAALPLSLDGDRCVARFYEAGQPVGDFTLPMAGLHNLSNATGALAACRMEGLPFNQLVEGLAGLKAPGRRFDLRGTWKGRHIVDDYAHHPSEVQATLEMARLMVRSGRSPLPSAPQRLLAVFQPHRYSRTRQFLDGFAKALQNCDLLLLAPVYPAGEQPLQGISSNALADRVRKLKPDLEIAVAENLDQLTELVIQHSLENDLVLAMGAGDVNGLWSRLTS.

123-129 lines the ATP pocket; that stretch reads GSHGKTT.

This sequence belongs to the MurCDEF family.

The protein resides in the cytoplasm. The enzyme catalyses UDP-N-acetyl-alpha-D-muramate + L-alanine + ATP = UDP-N-acetyl-alpha-D-muramoyl-L-alanine + ADP + phosphate + H(+). It functions in the pathway cell wall biogenesis; peptidoglycan biosynthesis. In terms of biological role, cell wall formation. The chain is UDP-N-acetylmuramate--L-alanine ligase from Synechococcus sp. (strain CC9605).